We begin with the raw amino-acid sequence, 125 residues long: Prefoldin subunit beta (125 aa).

Belongs to the prefoldin subunit beta family. Heterohexamer of two alpha and four beta subunits.

Its subcellular location is the cytoplasm. Its function is as follows. Molecular chaperone capable of stabilizing a range of proteins. Seems to fulfill an ATP-independent, HSP70-like function in archaeal de novo protein folding. The sequence is that of Prefoldin subunit beta from Sulfolobus acidocaldarius (strain ATCC 33909 / DSM 639 / JCM 8929 / NBRC 15157 / NCIMB 11770).